Consider the following 473-residue polypeptide: Photosystem II CP43 reaction center protein (473 aa).

Positions methionine 1–glutamate 14 are excised as a propeptide. Threonine 15 carries the N-acetylthreonine modification. Threonine 15 carries the phosphothreonine modification. The next 5 membrane-spanning stretches (helical) occupy residues leucine 69 to alanine 93, leucine 134 to asparagine 155, lysine 178 to threonine 200, lysine 255 to serine 275, and tryptophan 291 to alanine 312. Glutamate 367 serves as a coordination point for [CaMn4O5] cluster. The helical transmembrane segment at arginine 447 to proline 471 threads the bilayer.

Belongs to the PsbB/PsbC family. PsbC subfamily. In terms of assembly, PSII is composed of 1 copy each of membrane proteins PsbA, PsbB, PsbC, PsbD, PsbE, PsbF, PsbH, PsbI, PsbJ, PsbK, PsbL, PsbM, PsbT, PsbX, PsbY, PsbZ, Psb30/Ycf12, at least 3 peripheral proteins of the oxygen-evolving complex and a large number of cofactors. It forms dimeric complexes. Requires Binds multiple chlorophylls and provides some of the ligands for the Ca-4Mn-5O cluster of the oxygen-evolving complex. It may also provide a ligand for a Cl- that is required for oxygen evolution. PSII binds additional chlorophylls, carotenoids and specific lipids. as cofactor.

Its subcellular location is the plastid. The protein resides in the chloroplast thylakoid membrane. One of the components of the core complex of photosystem II (PSII). It binds chlorophyll and helps catalyze the primary light-induced photochemical processes of PSII. PSII is a light-driven water:plastoquinone oxidoreductase, using light energy to abstract electrons from H(2)O, generating O(2) and a proton gradient subsequently used for ATP formation. The protein is Photosystem II CP43 reaction center protein of Acorus calamus var. americanus (American sweet flag).